We begin with the raw amino-acid sequence, 542 residues long: Neurofilament light polypeptide (542 aa).

S2 is subject to N-acetylserine. Residues 2–93 (SSFSYEPYFS…KSIRTQEKAQ (92 aa)) form a head region. T21 carries O-linked (GlcNAc) threonine glycosylation. R23 carries the asymmetric dimethylarginine; alternate modification. R23 carries the post-translational modification Omega-N-methylarginine; alternate. An O-linked (GlcNAc) serine glycan is attached at S27. Omega-N-methylarginine is present on R30. Y43 carries the phosphotyrosine modification. S56, S67, and S103 each carry phosphoserine. The IF rod domain occupies 90-401 (EKAQLQDLND…KLLEGEETRL (312 aa)). A coil 1A region spans residues 94 to 125 (LQDLNDRFASFIERVHELEQQNKVLEAELLVL). The linker 1 stretch occupies residues 126 to 138 (RQKHSEPSRFRAL). The interval 139–234 (YEQEIRDLRL…KVHEEEIAEL (96 aa)) is coil 1B. The segment at 235-253 (QAQIQYAQISVEMDVSSKP) is linker 12. Positions 254-272 (DLSAALKDIRAQYEKLAAK) are coil 2A. The segment at 273–281 (NMQNAEEWF) is linker 2. A coil 2B region spans residues 282-397 (KSRFTVLTES…AAYRKLLEGE (116 aa)). Residues 382 to 392 (ALDIEIAAYRK) are epitope; recognized by IF-specific monoclonal antibody. The interval 398–444 (ETRLSFTSVGSITSGYSQSSQVFGRSAYSGLQSSSYLMSARAFPAYY) is tail, subdomain A. Residues 398–542 (ETRLSFTSVG…GEEQAAKKKD (145 aa)) are tail. Residues 445–542 (TSHVQEEQSE…GEEQAAKKKD (98 aa)) form a tail, subdomain B (acidic) region. Residues 451–542 (EQSEVEETIE…GEEQAAKKKD (92 aa)) form a disordered region. A Phosphoserine modification is found at S453. Positions 460–471 (EATKAEEAKDEP) are enriched in basic and acidic residues. Residues 472–527 (PSEGEAEEEEKEKEEGEEEEGAEEEEAAKDESEDAKEEEGGEGEEEDTKESEEEEK) show a composition bias toward acidic residues. 2 positions are modified to phosphoserine: S473 and S503. At T519 the chain carries Phosphothreonine. S522 and S531 each carry phosphoserine. Over residues 528 to 542 (KEESAGEEQAAKKKD) the composition is skewed to basic and acidic residues.

The protein belongs to the intermediate filament family. As to quaternary structure, forms homodimers (in vitro). Forms heterodimers with NEFH or NEFM; which can further hetero-oligomerize (in vitro). Forms heterodimers with INA (in vitro). Interacts with ARHGEF28. Interacts with TRIM2. O-glycosylated; contains three N-acetylglucosamine side chains. Post-translationally, phosphorylated in the head and rod regions by the PKC kinase PKN1, leading to the inhibition of polymerization. In terms of processing, ubiquitinated in the presence of TRIM2 and UBE2D1. As to expression, expressed in the dorsal root ganglion neurons (at protein level).

The protein localises to the cell projection. It is found in the axon. It localises to the cytoplasm. Its subcellular location is the cytoskeleton. Its function is as follows. Neurofilaments usually contain three intermediate filament proteins: NEFL, NEFM, and NEFH which are involved in the maintenance of neuronal caliber. May additionally cooperate with the neuronal intermediate filament proteins PRPH and INA to form neuronal filamentous networks. The protein is Neurofilament light polypeptide (Nefl) of Rattus norvegicus (Rat).